Here is a 72-residue protein sequence, read N- to C-terminus: UPF0270 protein Ent638_3781 (72 aa).

This sequence belongs to the UPF0270 family.

The protein is UPF0270 protein Ent638_3781 of Enterobacter sp. (strain 638).